The chain runs to 420 residues: Histidine--tRNA ligase (420 aa).

Belongs to the class-II aminoacyl-tRNA synthetase family. Homodimer.

Its subcellular location is the cytoplasm. It catalyses the reaction tRNA(His) + L-histidine + ATP = L-histidyl-tRNA(His) + AMP + diphosphate + H(+). This is Histidine--tRNA ligase from Desulforudis audaxviator (strain MP104C).